The primary structure comprises 162 residues: NADH-quinone oxidoreductase subunit I (162 aa).

2 4Fe-4S ferredoxin-type domains span residues 53-83 and 93-122; these read LRRY…IEAE and TRYD…EGPN. [4Fe-4S] cluster-binding residues include Cys63, Cys66, Cys69, Cys73, Cys102, Cys105, Cys108, and Cys112.

Belongs to the complex I 23 kDa subunit family. As to quaternary structure, NDH-1 is composed of 14 different subunits. Subunits NuoA, H, J, K, L, M, N constitute the membrane sector of the complex. [4Fe-4S] cluster serves as cofactor.

It is found in the cell inner membrane. The catalysed reaction is a quinone + NADH + 5 H(+)(in) = a quinol + NAD(+) + 4 H(+)(out). NDH-1 shuttles electrons from NADH, via FMN and iron-sulfur (Fe-S) centers, to quinones in the respiratory chain. The immediate electron acceptor for the enzyme in this species is believed to be ubiquinone. Couples the redox reaction to proton translocation (for every two electrons transferred, four hydrogen ions are translocated across the cytoplasmic membrane), and thus conserves the redox energy in a proton gradient. The chain is NADH-quinone oxidoreductase subunit I from Maricaulis maris (strain MCS10) (Caulobacter maris).